The sequence spans 348 residues: [FeFe] hydrogenase maturase subunit HydE (348 aa).

Residues 49–268 form the Radical SAM core domain; that stretch reads DEVHIRAIIE…LLPDSNIPAT (220 aa). Residues C63, C67, and C70 each coordinate [4Fe-4S] cluster. Positions 311, 319, and 322 each coordinate [2Fe-2S] cluster.

It belongs to the radical SAM superfamily. HydE family. Monomer. [4Fe-4S] cluster serves as cofactor. [2Fe-2S] cluster is required as a cofactor.

Functionally, required for the maturation of the [FeFe]-hydrogenase HydA. Catalyzes the reductive cleavage of S-adenosyl-L-methionine (in vitro), suggesting it may contribute to the biosynthesis of an essential sulfur-containing ligand that binds to the hydrogenase active site [2Fe-2S] cluster. The polypeptide is [FeFe] hydrogenase maturase subunit HydE (Thermotoga maritima (strain ATCC 43589 / DSM 3109 / JCM 10099 / NBRC 100826 / MSB8)).